The sequence spans 101 residues: NAD(P)H-quinone oxidoreductase subunit 4L, chloroplastic (101 aa).

The next 3 helical transmembrane spans lie at 2–22, 32–52, and 61–81; these read ILEH…YGLI, MCLE…SDFF, and IFCI…LAIV.

Belongs to the complex I subunit 4L family. In terms of assembly, NDH is composed of at least 16 different subunits, 5 of which are encoded in the nucleus.

Its subcellular location is the plastid. It localises to the chloroplast thylakoid membrane. It carries out the reaction a plastoquinone + NADH + (n+1) H(+)(in) = a plastoquinol + NAD(+) + n H(+)(out). The enzyme catalyses a plastoquinone + NADPH + (n+1) H(+)(in) = a plastoquinol + NADP(+) + n H(+)(out). Its function is as follows. NDH shuttles electrons from NAD(P)H:plastoquinone, via FMN and iron-sulfur (Fe-S) centers, to quinones in the photosynthetic chain and possibly in a chloroplast respiratory chain. The immediate electron acceptor for the enzyme in this species is believed to be plastoquinone. Couples the redox reaction to proton translocation, and thus conserves the redox energy in a proton gradient. The chain is NAD(P)H-quinone oxidoreductase subunit 4L, chloroplastic from Draba nemorosa (Woodland whitlowgrass).